We begin with the raw amino-acid sequence, 389 residues long: 2-aminoethylphosphonate--pyruvate transaminase 1 (389 aa).

An N6-(pyridoxal phosphate)lysine modification is found at K196.

The protein belongs to the class-V pyridoxal-phosphate-dependent aminotransferase family. PhnW subfamily. Homodimer. Pyridoxal 5'-phosphate is required as a cofactor.

The enzyme catalyses (2-aminoethyl)phosphonate + pyruvate = phosphonoacetaldehyde + L-alanine. Its function is as follows. Involved in phosphonate degradation. This Paraburkholderia xenovorans (strain LB400) protein is 2-aminoethylphosphonate--pyruvate transaminase 1.